Here is a 60-residue protein sequence, read N- to C-terminus: Large ribosomal subunit protein bL32 (60 aa).

Over residues 1–23 the composition is skewed to basic residues; that stretch reads MAKHPVPKKKTSKARRDARRSHH. Residues 1-28 are disordered; that stretch reads MAKHPVPKKKTSKARRDARRSHHALTPP.

The protein belongs to the bacterial ribosomal protein bL32 family. As to quaternary structure, part of the 50S ribosomal subunit.

In terms of biological role, found on the solvent side of the large subunit. The protein is Large ribosomal subunit protein bL32 (rpmF) of Thermus thermophilus (strain ATCC BAA-163 / DSM 7039 / HB27).